We begin with the raw amino-acid sequence, 722 residues long: Protein Aster-A (722 aa).

Residues 1–62 (MFDTTPHSGR…KSGVSGTLST (62 aa)) are disordered. Residues 8 to 18 (SGRSSPSSSPS) are compositionally biased toward low complexity. The GRAM domain maps to 93 to 160 (EDFRKLFSKL…KEVTCLKKEK (68 aa)). Positions 256–336 (ISPSGAADHS…DGPTSSLGPL (81 aa)) are disordered. Ser265, Ser269, Ser273, and Ser417 each carry phosphoserine. Residues 369-540 (SGRLLINSVF…ELAKAEKLSL (172 aa)) form the VASt domain. The tract at residues 561–600 (LSWRGHRDGPQHPDPDPCTQTSMHTSGSLSSRFSEPSVDQ) is disordered. The span at 565-575 (GHRDGPQHPDP) shows a compositional bias: basic and acidic residues. A compositionally biased stretch (polar residues) spans 578–594 (CTQTSMHTSGSLSSRFS). The chain crosses the membrane as a helical span at residues 609–629 (ALVLISIVLIVLIALNALLFY).

Highly expressed in the brain.

Its subcellular location is the endoplasmic reticulum membrane. It is found in the cell membrane. It localises to the cytoplasmic vesicle. The protein resides in the autophagosome. Its function is as follows. Cholesterol transporter that mediates non-vesicular transport of cholesterol from the plasma membrane (PM) to the endoplasmic reticulum (ER). Contains unique domains for binding cholesterol and the PM, thereby serving as a molecular bridge for the transfer of cholesterol from the PM to the ER. Plays a crucial role in cholesterol homeostasis and has the unique ability to localize to the PM based on the level of membrane cholesterol. In lipid-poor conditions localizes to the ER membrane and in response to excess cholesterol in the PM is recruited to the endoplasmic reticulum-plasma membrane contact sites (EPCS) which is mediated by the GRAM domain. At the EPCS, the sterol-binding VASt/ASTER domain binds to the cholesterol in the PM and facilitates its transfer from the PM to ER. May play a role in tumor progression. Plays a role in autophagy regulation and is required for biogenesis of the autophagosome. This function in autophagy requires its cholesterol-transfer activity. This Mus musculus (Mouse) protein is Protein Aster-A.